A 75-amino-acid chain; its full sequence is ATP synthase subunit c (75 aa).

The next 2 helical transmembrane spans lie at 13 to 33 (LSVI…GILF) and 55 to 75 (FIGL…ALII).

It belongs to the ATPase C chain family. As to quaternary structure, F-type ATPases have 2 components, F(1) - the catalytic core - and F(0) - the membrane proton channel. F(1) has five subunits: alpha(3), beta(3), gamma(1), delta(1), epsilon(1). F(0) has three main subunits: a(1), b(2) and c(10-14). The alpha and beta chains form an alternating ring which encloses part of the gamma chain. F(1) is attached to F(0) by a central stalk formed by the gamma and epsilon chains, while a peripheral stalk is formed by the delta and b chains.

Its subcellular location is the cell membrane. Its function is as follows. F(1)F(0) ATP synthase produces ATP from ADP in the presence of a proton or sodium gradient. F-type ATPases consist of two structural domains, F(1) containing the extramembraneous catalytic core and F(0) containing the membrane proton channel, linked together by a central stalk and a peripheral stalk. During catalysis, ATP synthesis in the catalytic domain of F(1) is coupled via a rotary mechanism of the central stalk subunits to proton translocation. In terms of biological role, key component of the F(0) channel; it plays a direct role in translocation across the membrane. A homomeric c-ring of between 10-14 subunits forms the central stalk rotor element with the F(1) delta and epsilon subunits. This is ATP synthase subunit c from Bifidobacterium longum (strain DJO10A).